The following is a 504-amino-acid chain: ATP synthase subunit beta (504 aa).

181-188 (GGAGVGKT) contacts ATP.

It belongs to the ATPase alpha/beta chains family. As to quaternary structure, F-type ATPases have 2 components, CF(1) - the catalytic core - and CF(0) - the membrane proton channel. CF(1) has five subunits: alpha(3), beta(3), gamma(1), delta(1), epsilon(1). CF(0) has three main subunits: a(1), b(2) and c(9-12). The alpha and beta chains form an alternating ring which encloses part of the gamma chain. CF(1) is attached to CF(0) by a central stalk formed by the gamma and epsilon chains, while a peripheral stalk is formed by the delta and b chains.

It is found in the cell inner membrane. It carries out the reaction ATP + H2O + 4 H(+)(in) = ADP + phosphate + 5 H(+)(out). Produces ATP from ADP in the presence of a proton gradient across the membrane. The catalytic sites are hosted primarily by the beta subunits. The polypeptide is ATP synthase subunit beta (Ehrlichia ruminantium (strain Welgevonden)).